The chain runs to 674 residues: DNA ligase (674 aa).

NAD(+) contacts are provided by residues D35–D39, S84–L85, and E116. The N6-AMP-lysine intermediate role is filled by K118. NAD(+)-binding residues include R139, E176, K293, and K317. C411, C414, C429, and C435 together coordinate Zn(2+). One can recognise a BRCT domain in the interval D593–V674.

It belongs to the NAD-dependent DNA ligase family. LigA subfamily. The cofactor is Mg(2+). Mn(2+) serves as cofactor.

The catalysed reaction is NAD(+) + (deoxyribonucleotide)n-3'-hydroxyl + 5'-phospho-(deoxyribonucleotide)m = (deoxyribonucleotide)n+m + AMP + beta-nicotinamide D-nucleotide.. DNA ligase that catalyzes the formation of phosphodiester linkages between 5'-phosphoryl and 3'-hydroxyl groups in double-stranded DNA using NAD as a coenzyme and as the energy source for the reaction. It is essential for DNA replication and repair of damaged DNA. The sequence is that of DNA ligase from Saccharophagus degradans (strain 2-40 / ATCC 43961 / DSM 17024).